Here is a 106-residue protein sequence, read N- to C-terminus: UPF0145 protein azo0572 (106 aa).

The protein belongs to the UPF0145 family.

The protein is UPF0145 protein azo0572 of Azoarcus sp. (strain BH72).